Reading from the N-terminus, the 245-residue chain is Tryptophan synthase alpha chain (245 aa).

Active-site proton acceptor residues include glutamate 35 and aspartate 46.

Belongs to the TrpA family. Tetramer of two alpha and two beta chains.

The catalysed reaction is (1S,2R)-1-C-(indol-3-yl)glycerol 3-phosphate + L-serine = D-glyceraldehyde 3-phosphate + L-tryptophan + H2O. It functions in the pathway amino-acid biosynthesis; L-tryptophan biosynthesis; L-tryptophan from chorismate: step 5/5. The alpha subunit is responsible for the aldol cleavage of indoleglycerol phosphate to indole and glyceraldehyde 3-phosphate. This Sulfurisphaera tokodaii (strain DSM 16993 / JCM 10545 / NBRC 100140 / 7) (Sulfolobus tokodaii) protein is Tryptophan synthase alpha chain.